A 1029-amino-acid polypeptide reads, in one-letter code: E3 ubiquitin-protein ligase UPL6 (1029 aa).

Residues 1 to 20 (MFFSGDPSTRKRVDLGGRST) form a disordered region. Residues 8–20 (STRKRVDLGGRST) are compositionally biased toward basic and acidic residues. The region spanning 45–74 (QNSAALKIQKFFRGRRSMAIERSKVRHDFC) is the IQ domain. The 342-residue stretch at 688–1029 (SEDDLRSSIR…ISAEAGFDLS (342 aa)) folds into the HECT domain. Cys-997 functions as the Glycyl thioester intermediate in the catalytic mechanism.

This sequence belongs to the UPL family.

It carries out the reaction S-ubiquitinyl-[E2 ubiquitin-conjugating enzyme]-L-cysteine + [acceptor protein]-L-lysine = [E2 ubiquitin-conjugating enzyme]-L-cysteine + N(6)-ubiquitinyl-[acceptor protein]-L-lysine.. It participates in protein modification; protein ubiquitination. Its function is as follows. Probable E3 ubiquitin-protein ligase which mediates ubiquitination and subsequent proteasomal degradation of target proteins. In Arabidopsis thaliana (Mouse-ear cress), this protein is E3 ubiquitin-protein ligase UPL6 (UPL6).